Here is a 623-residue protein sequence, read N- to C-terminus: V-type proton ATPase catalytic subunit A (623 aa).

An ATP-binding site is contributed by 252-259 (GAFGCGKT).

This sequence belongs to the ATPase alpha/beta chains family. V-ATPase is a heteromultimeric enzyme composed of a peripheral catalytic V1 complex (components A to H) attached to an integral membrane V0 proton pore complex (components: a, c, c'', d and e). Binds to the deubiquitinating enzyme AMSH3.

The protein resides in the vacuole membrane. It catalyses the reaction ATP + H2O + 4 H(+)(in) = ADP + phosphate + 5 H(+)(out). In terms of biological role, catalytic subunit of the peripheral V1 complex of vacuolar ATPase. V-ATPase vacuolar ATPase is responsible for acidifying a variety of intracellular compartments in eukaryotic cells. This chain is V-type proton ATPase catalytic subunit A (VHA-A), found in Arabidopsis thaliana (Mouse-ear cress).